The primary structure comprises 354 residues: Uroporphyrinogen decarboxylase (354 aa).

Residues 35-39 (RQAGR), Asp-84, Tyr-159, Ser-214, and His-333 each bind substrate.

It belongs to the uroporphyrinogen decarboxylase family. As to quaternary structure, homodimer.

Its subcellular location is the cytoplasm. It catalyses the reaction uroporphyrinogen III + 4 H(+) = coproporphyrinogen III + 4 CO2. It participates in porphyrin-containing compound metabolism; protoporphyrin-IX biosynthesis; coproporphyrinogen-III from 5-aminolevulinate: step 4/4. Its function is as follows. Catalyzes the decarboxylation of four acetate groups of uroporphyrinogen-III to yield coproporphyrinogen-III. This chain is Uroporphyrinogen decarboxylase, found in Nocardia farcinica (strain IFM 10152).